We begin with the raw amino-acid sequence, 397 residues long: MEPRGTKRKAEKTEVEKPLNKLPRAVPSLRTQPSLYSGPFPFYRRPSELGCFSLDAQRQYHGDARALRYYSPPPINGPGPDFDLRDGYPDRYQPRDEEVQERLDHLLRWVLEHRNQLEGGPGWLAGATVTWRGHLTKLLTTPYERQEGWQLAASRFQGTLYLSEVETPAARAQRLARPPLLRELMYMGYKFEQYMCADKPGGSPDPSGEVNTNVAYCSVLRSRLGNHPLLFSGEVDCLNPQAPCTQPPSCYVELKTSKEMHSPGQWRSFYRHKLLKWWAQSFLPGVPHVVAGFRNPEGFVCSLKTFPTMEMFENVRNDREGWNPSVCMNFCAAFLSFAQSTVVQDDPRLVHLFSWEPGGPVTVSVHRDAPYAFLPSWYVETMTQDLPPLSKTPSPKD.

Residues 1–10 show a composition bias toward basic residues; sequence MEPRGTKRKA. A disordered region spans residues 1–30; it reads MEPRGTKRKAEKTEVEKPLNKLPRAVPSLR. Substrate-binding positions include Arg58, Glu101, and 131-133; that span reads WRG. Met185 contacts adenosine 3',5'-bisphosphate. Glu192 provides a ligand contact to Mg(2+). Substrate-binding residues include Cys217 and Glu234. 4 residues coordinate Mg(2+): Glu234, Asp236, Glu253, and Leu254. Asp236 contacts adenosine 3',5'-bisphosphate. The adenosine 3',5'-bisphosphate; inhibitor stretch occupies residues 253–256; that stretch reads ELKT. Substrate-binding residues include Lys255 and Gln280. Gln280 provides a ligand contact to adenosine 3',5'-bisphosphate. Thr392 is subject to Phosphothreonine. At Ser394 the chain carries Phosphoserine.

The protein belongs to the DXO/Dom3Z family. Requires Mg(2+) as cofactor.

The protein localises to the nucleus. It carries out the reaction a 5'-end triphospho-ribonucleoside in mRNA + H2O = a 5'-end phospho-ribonucleoside in mRNA + diphosphate + H(+). It catalyses the reaction a 5'-end NAD(+)-phospho-ribonucleoside in mRNA + H2O = a 5'-end phospho-ribonucleoside in mRNA + NAD(+) + H(+). The catalysed reaction is a 5'-end NAD(+)-phospho-ribonucleoside in snoRNA + H2O = a 5'-end phospho-ribonucleoside in snoRNA + NAD(+) + H(+). The enzyme catalyses a 5'-end (N(7)-methyl 5'-triphosphoguanosine)-ribonucleoside-ribonucleotide in mRNA + H2O = a (N(7)-methyl 5'-triphosphoguanosine)-nucleoside + a 5'-end phospho-ribonucleoside in mRNA + H(+). It carries out the reaction a 5'-end FAD-phospho-ribonucleoside in mRNA + H2O = a 5'-end phospho-ribonucleoside in mRNA + FAD + H(+). It catalyses the reaction a 5'-end CoA-ribonucleoside in mRNA + H2O = 3'-dephospho-CoA + a 5'-end phospho-ribonucleoside in mRNA + H(+). Its activity is regulated as follows. The 5'-3' exoribonuclease activity is inhibited by adenosine 3',5'-bisphosphate. Its function is as follows. Decapping enzyme for NAD-capped RNAs: specifically hydrolyzes the nicotinamide adenine dinucleotide (NAD) cap from a subset of RNAs by removing the entire NAD moiety from the 5'-end of an NAD-capped RNA. The NAD-cap is present at the 5'-end of some RNAs and snoRNAs. In contrast to the canonical 5'-end N7 methylguanosine (m7G) cap, the NAD cap promotes mRNA decay. Preferentially acts on NAD-capped transcripts in response to environmental stress. Also acts as a non-canonical decapping enzyme that removes the entire cap structure of m7G capped or incompletely capped RNAs and mediates their subsequent degradation. Specifically degrades pre-mRNAs with a defective 5'-end m7G cap and is part of a pre-mRNA capping quality control. Has decapping activity toward incomplete 5'-end m7G cap mRNAs such as unmethylated 5'-end-capped RNA (cap0), while it has no activity toward 2'-O-ribose methylated m7G cap (cap1). In contrast to canonical decapping enzymes DCP2 and NUDT16, which cleave the cap within the triphosphate linkage, the decapping activity releases the entire cap structure GpppN and a 5'-end monophosphate RNA. Also has 5'-3' exoribonuclease activities: The 5'-end monophosphate RNA is then degraded by the 5'-3' exoribonuclease activity, enabling this enzyme to decap and degrade incompletely capped mRNAs. Also possesses RNA 5'-pyrophosphohydrolase activity by hydrolyzing the 5'-end triphosphate to release pyrophosphates. Exhibits decapping activity towards FAD-capped RNAs. Exhibits decapping activity towards dpCoA-capped RNAs in vitro. This is Decapping and exoribonuclease protein from Mus musculus (Mouse).